A 398-amino-acid chain; its full sequence is Riboflavin biosynthesis protein RibBA (398 aa).

A DHBP synthase region spans residues 1 to 199 (MFHPIEEALD…IKDLIQYRYN (199 aa)). D-ribulose 5-phosphate-binding positions include 26–27 (RE), D31, 138–142 (RAGHT), and E162. E27 contacts Mg(2+). H141 lines the Mg(2+) pocket. The segment at 200-398 (LTTLVEREVD…MNKLGHLLHF (199 aa)) is GTP cyclohydrolase II. A GTP-binding site is contributed by 251–255 (RVHSE). Positions 256, 267, and 269 each coordinate Zn(2+). GTP contacts are provided by residues Q272, 294-296 (EGR), and T316. Catalysis depends on D328, which acts as the Proton acceptor; for GTP cyclohydrolase activity. R330 functions as the Nucleophile; for GTP cyclohydrolase activity in the catalytic mechanism. The GTP site is built by T351 and K356.

This sequence in the N-terminal section; belongs to the DHBP synthase family. It in the C-terminal section; belongs to the GTP cyclohydrolase II family. Mg(2+) serves as cofactor. Mn(2+) is required as a cofactor. The cofactor is Zn(2+).

It catalyses the reaction D-ribulose 5-phosphate = (2S)-2-hydroxy-3-oxobutyl phosphate + formate + H(+). The enzyme catalyses GTP + 4 H2O = 2,5-diamino-6-hydroxy-4-(5-phosphoribosylamino)-pyrimidine + formate + 2 phosphate + 3 H(+). It participates in cofactor biosynthesis; riboflavin biosynthesis; 2-hydroxy-3-oxobutyl phosphate from D-ribulose 5-phosphate: step 1/1. The protein operates within cofactor biosynthesis; riboflavin biosynthesis; 5-amino-6-(D-ribitylamino)uracil from GTP: step 1/4. Its function is as follows. Catalyzes the conversion of D-ribulose 5-phosphate to formate and 3,4-dihydroxy-2-butanone 4-phosphate. Catalyzes the conversion of GTP to 2,5-diamino-6-ribosylamino-4(3H)-pyrimidinone 5'-phosphate (DARP), formate and pyrophosphate. The protein is Riboflavin biosynthesis protein RibBA of Bacillus subtilis (strain 168).